The sequence spans 225 residues: Tryptophan synthase beta chain (225 aa).

This sequence belongs to the TrpB family. As to quaternary structure, tetramer of two alpha and two beta chains. Requires pyridoxal 5'-phosphate as cofactor.

The enzyme catalyses (1S,2R)-1-C-(indol-3-yl)glycerol 3-phosphate + L-serine = D-glyceraldehyde 3-phosphate + L-tryptophan + H2O. It functions in the pathway amino-acid biosynthesis; L-tryptophan biosynthesis; L-tryptophan from chorismate: step 5/5. In terms of biological role, the beta subunit is responsible for the synthesis of L-tryptophan from indole and L-serine. This is Tryptophan synthase beta chain (trpB) from Buchnera aphidicola subsp. Rhopalosiphum padi.